A 716-amino-acid chain; its full sequence is Beta-galactosidase (716 aa).

Glu-389 serves as the catalytic Proton donor. Catalysis depends on Glu-462, which acts as the Nucleophile.

It belongs to the glycosyl hydrolase 2 family. As to quaternary structure, homodimer.

It catalyses the reaction Hydrolysis of terminal non-reducing beta-D-galactose residues in beta-D-galactosides.. In terms of biological role, displays beta-galactosidase activity with the artificial chromogenic substrate o-nitrophenyl-beta-D-galactopyranoside (ONPG). This Thermoanaerobacterium thermosulfurigenes (Clostridium thermosulfurogenes) protein is Beta-galactosidase.